The chain runs to 285 residues: 4-diphosphocytidyl-2-C-methyl-D-erythritol kinase (285 aa).

The active site involves lysine 10. 93–103 is a binding site for ATP; the sequence is PIGGGLGGGSS. Aspartate 135 is an active-site residue.

This sequence belongs to the GHMP kinase family. IspE subfamily.

It catalyses the reaction 4-CDP-2-C-methyl-D-erythritol + ATP = 4-CDP-2-C-methyl-D-erythritol 2-phosphate + ADP + H(+). It participates in isoprenoid biosynthesis; isopentenyl diphosphate biosynthesis via DXP pathway; isopentenyl diphosphate from 1-deoxy-D-xylulose 5-phosphate: step 3/6. In terms of biological role, catalyzes the phosphorylation of the position 2 hydroxy group of 4-diphosphocytidyl-2C-methyl-D-erythritol. The polypeptide is 4-diphosphocytidyl-2-C-methyl-D-erythritol kinase (Vesicomyosocius okutanii subsp. Calyptogena okutanii (strain HA)).